A 106-amino-acid polypeptide reads, in one-letter code: UPF0642 protein YBL028C (106 aa).

Residues 1 to 12 (MAKSLRASSHLN) are compositionally biased toward polar residues. 2 disordered regions span residues 1–21 (MAKSLRASSHLNAKSVKRRGV) and 52–106 (KEEQ…FTRF). A compositionally biased stretch (basic and acidic residues) spans 62-72 (DEKKSNEEAPR). Residues 83–106 (GRHHTYKKAKLMKQSKKKTSFTRF) show a composition bias toward basic residues.

Belongs to the UPF0642 family.

The chain is UPF0642 protein YBL028C from Saccharomyces cerevisiae (strain ATCC 204508 / S288c) (Baker's yeast).